We begin with the raw amino-acid sequence, 241 residues long: 2-C-methyl-D-erythritol 4-phosphate cytidylyltransferase (241 aa).

This sequence belongs to the IspD/TarI cytidylyltransferase family. IspD subfamily.

It catalyses the reaction 2-C-methyl-D-erythritol 4-phosphate + CTP + H(+) = 4-CDP-2-C-methyl-D-erythritol + diphosphate. It participates in isoprenoid biosynthesis; isopentenyl diphosphate biosynthesis via DXP pathway; isopentenyl diphosphate from 1-deoxy-D-xylulose 5-phosphate: step 2/6. Its function is as follows. Catalyzes the formation of 4-diphosphocytidyl-2-C-methyl-D-erythritol from CTP and 2-C-methyl-D-erythritol 4-phosphate (MEP). This is 2-C-methyl-D-erythritol 4-phosphate cytidylyltransferase from Mycobacterium leprae (strain Br4923).